Consider the following 587-residue polypeptide: Protein NRT1/ PTR FAMILY 2.9 (587 aa).

12 helical membrane passes run 35–55 (FEKL…TTVF), 65–85 (VVNI…FLCD), 94–114 (LSFA…TAVI), 135–155 (IGQI…AGGI), 181–201 (FFNW…TLIV), 209–229 (WSIG…IFFA), 325–345 (CVIR…AYIQ), 368–388 (IPAG…IPIY), 412–432 (VGAG…VEQY), 457–477 (GMWL…AGVG), 493–513 (FAGS…TFLL), and 540–560 (YFYF…LLVS).

Belongs to the major facilitator superfamily. Proton-dependent oligopeptide transporter (POT/PTR) (TC 2.A.17) family. As to expression, expressed in roots, stems and major veins of the leaves. Detected in the companion cells of the root phloem.

It is found in the cell membrane. Functionally, low-affinity nitrate transporter facilitating nitrate loading into root phloem. Not involved in dipeptides transport, but has a weak glucosinolate transport activity. The sequence is that of Protein NRT1/ PTR FAMILY 2.9 (NPF2.9) from Arabidopsis thaliana (Mouse-ear cress).